A 229-amino-acid chain; its full sequence is Large ribosomal subunit protein uL1 (229 aa).

It belongs to the universal ribosomal protein uL1 family. As to quaternary structure, part of the 50S ribosomal subunit.

In terms of biological role, binds directly to 23S rRNA. The L1 stalk is quite mobile in the ribosome, and is involved in E site tRNA release. Protein L1 is also a translational repressor protein, it controls the translation of the L11 operon by binding to its mRNA. This chain is Large ribosomal subunit protein uL1, found in Lactococcus lactis subsp. lactis (strain IL1403) (Streptococcus lactis).